The primary structure comprises 480 residues: MYPPALTLLLTPGLVAAAIQPQAYASSADGRYKLSSYSAPVRGTGTPGSNSTWKLTIDDTPSGRKQTIKGFGAAVTDSTVSVFNALPSAQRTALLNTLMTTAGANFAMMRHTIASSDLSANPAYSYDDSNGQTDLSLSNFNLGGRGNAMASLLAEMRRLQPGLTILGSPWSPPGWMKLNRAIQGTTVNNNLDHAYASQFAQYFVKYLQAYQAKGATIDAITIQNEPLNSRAQMPTMYIYADEAGDLIQNNIGPALRNAGLDTKIWAYDHNTDQPSYPSTVLSRAGGYVPAVAWHCYASSLDWSVLTTFHNAHPGVEQYMTECWTSAKQPTPWNWAASFTMGPLQNWASGVTAWVLGTDTNDGPHLTGSDACDKCTGLVTVDAAAGTYNLRGDYYMMAQFSKFMKKGAVVMSGTGSWTYGDGSGLESVAATNADDGSRVVVIENKFGNEIYVTVEAKSGEVWSGLVYRNSVVTWVLPAAGA.

Residues 1–17 form the signal peptide; that stretch reads MYPPALTLLLTPGLVAA. Asparagine 50 is a glycosylation site (N-linked (GlcNAc...) asparagine). Catalysis depends on glutamate 225, which acts as the Proton donor. Glutamate 321 functions as the Nucleophile in the catalytic mechanism.

Belongs to the glycosyl hydrolase 30 family.

Its subcellular location is the secreted. It carries out the reaction Random hydrolysis of (1-&gt;6)-linkages in (1-&gt;6)-beta-D-glucans.. In terms of biological role, partially degrades N.crassa cell wall beta-D-glucan, liberating small amounts of oligosaccharides. In Neurospora crassa (strain ATCC 24698 / 74-OR23-1A / CBS 708.71 / DSM 1257 / FGSC 987), this protein is Endo-1,6-beta-D-glucanase (neg-1).